The following is a 219-amino-acid chain: uncharacterized protein (219 aa).

The ACT domain occupies glycine 4–serine 79.

This is an uncharacterized protein from Archaeoglobus fulgidus (strain ATCC 49558 / DSM 4304 / JCM 9628 / NBRC 100126 / VC-16).